Here is a 419-residue protein sequence, read N- to C-terminus: L-rhamnose isomerase (419 aa).

Mn(2+) is bound by residues H262, D294, and D296.

This sequence belongs to the rhamnose isomerase family. Homotetramer. Mn(2+) serves as cofactor.

It localises to the cytoplasm. It catalyses the reaction L-rhamnopyranose = L-rhamnulose. The protein operates within carbohydrate degradation; L-rhamnose degradation; glycerone phosphate from L-rhamnose: step 1/3. Catalyzes the interconversion of L-rhamnose and L-rhamnulose. The protein is L-rhamnose isomerase of Citrobacter koseri (strain ATCC BAA-895 / CDC 4225-83 / SGSC4696).